A 466-amino-acid chain; its full sequence is 3-isopropylmalate dehydratase large subunit (466 aa).

3 residues coordinate [4Fe-4S] cluster: C347, C407, and C410.

Belongs to the aconitase/IPM isomerase family. LeuC type 1 subfamily. In terms of assembly, heterodimer of LeuC and LeuD. It depends on [4Fe-4S] cluster as a cofactor.

The enzyme catalyses (2R,3S)-3-isopropylmalate = (2S)-2-isopropylmalate. It functions in the pathway amino-acid biosynthesis; L-leucine biosynthesis; L-leucine from 3-methyl-2-oxobutanoate: step 2/4. Its function is as follows. Catalyzes the isomerization between 2-isopropylmalate and 3-isopropylmalate, via the formation of 2-isopropylmaleate. This is 3-isopropylmalate dehydratase large subunit from Buchnera aphidicola subsp. Diuraphis noxia.